The chain runs to 309 residues: Palmitoyltransferase ZDHHC19 (309 aa).

2 helical membrane-spanning segments follow: residues Leu-29–Pro-49 and Trp-59–Leu-79. The DHHC domain occupies Gln-112 to Leu-162. Cys-142 acts as the S-palmitoyl cysteine intermediate in catalysis. 2 helical membrane passes run Leu-160 to Val-180 and Ile-193 to Leu-213. The span at Leu-280–Pro-294 shows a compositional bias: pro residues. Residues Leu-280 to Trp-309 form a disordered region.

Belongs to the DHHC palmitoyltransferase family.

It is found in the golgi apparatus membrane. The protein resides in the cytoplasm. It localises to the perinuclear region. It carries out the reaction L-cysteinyl-[protein] + hexadecanoyl-CoA = S-hexadecanoyl-L-cysteinyl-[protein] + CoA. Palmitoyltransferase that mediates palmitoylation oproteins, such as RRAS and SQSTM1. Catalyzes palmitoylation of RRAS, leading to increased cell viability. Acts as a positive regulator of autophagy by mediating palmitoylation of SQSTM1, promoting affinity between SQSTM1 and ATG8 proteins and recruitment of ubiquitinated cargo proteins to autophagosomes. In terms of biological role, (Microbial infection) Promotes Chikungunya virus (CHIKV) replication by mediating viral nsp1 palmitoylation. In Homo sapiens (Human), this protein is Palmitoyltransferase ZDHHC19.